The sequence spans 479 residues: Odorant receptor coreceptor (479 aa).

The Cytoplasmic portion of the chain corresponds to 1–43 (MMKMKQQGLVADLLPNIRVMKFFGHFVFNYYDDNSSKYLHKIF). The chain crosses the membrane as a helical span at residues 44-64 (CCVNLFLLLLQFALCAVNLII). Topologically, residues 65-73 (ESADVDDLT) are extracellular. Residues 74–94 (ANTITLLFFTHSIVKIIYFAV) traverse the membrane as a helical segment. Residues 95–133 (RSKYFYRTWAIWNNPNSHPLFAESNARYHAIALKKMRLL) are Cytoplasmic-facing. Residues 134 to 154 (LFLVGATTVLSAIAWTVLTFF) form a helical membrane-spanning segment. Over 155–190 (EHPIRKLVDPVTNETTIIELPQLLLRSYYPFDASKG) the chain is Extracellular. Residue asparagine 167 is glycosylated (N-linked (GlcNAc...) asparagine). The helical transmembrane segment at 191 to 211 (IMHVIVLIYQFYWVLFMLIDA) threads the bilayer. Topologically, residues 212-350 (NSLDVLFCSW…IVRLVTAVGD (139 aa)) are cytoplasmic. The interval 261-280 (SAEHLRESENQPPPPVPPQG) is disordered. The chain crosses the membrane as a helical span at residues 351 to 371 (AYGFALLLHMLTTTITLTLLA). Topologically, residues 372-383 (YQATKVNGVNVY) are extracellular. The helical transmembrane segment at 384–404 (AASTIGYIIYTFGQVFLFCIF) threads the bilayer. The Cytoplasmic segment spans residues 405-455 (GNRLIEESTSVMEAAYSCHWYDGSEEAKTFVQIVCQQCQKAMSISGAKFFT). A helical transmembrane segment spans residues 456–476 (VSLDLFASVLGAVVTYFMVLV). Topologically, residues 477 to 479 (QLK) are extracellular.

The protein belongs to the insect chemoreceptor superfamily. Heteromeric odorant receptor channel (TC 1.A.69) family. Orco subfamily. As to quaternary structure, heterodimer with conventional odorant receptors (ORs).

The protein localises to the cell membrane. Functionally, odorant coreceptor which complexes with conventional odorant receptors (ORs) to form odorant-sensing units, providing sensitive and prolonged odorant signaling and calcium permeability. Obligate coreceptor of all odorant receptors. Orco is a universal and integral part of the functional odorant receptor, involved in the dendritic localization of other olfactory receptors. Can form functional ion channels in the absence of an odor-binding odorant receptor. Plays a central role in the perception of olfactory stimuli in ants and is essential for ant social organization. Required for pheromone sensing and mating behavior. Also required for the development and maintenance of odorant receptor neurons (ORNs) and of antennal lobe glomeruli. In Harpegnathos saltator (Jerdon's jumping ant), this protein is Odorant receptor coreceptor.